The chain runs to 140 residues: Organic hydroperoxide resistance protein-like (140 aa).

It belongs to the OsmC/Ohr family.

The protein is Organic hydroperoxide resistance protein-like of Staphylococcus aureus (strain MSSA476).